Reading from the N-terminus, the 80-residue chain is Serine protease inhibitor Kazal-type 6 (80 aa).

Residues 1-23 (MKLSGMFLLLSLALFCFLTGVFS) form the signal peptide. Pyrrolidone carboxylic acid is present on Q24. One can recognise a Kazal-like domain in the interval 24-80 (QGGQVDCGEFQDPKVYCTRESNPHCGSDGQTYGNKCAFCKAIVKSGGKISLKHPGKC). Disulfide bonds link C30–C62, C40–C59, and C48–C80.

It is found in the secreted. Functionally, serine protease inhibitor selective for kallikreins. Efficiently inhibits KLK4, KLK5, KLK6, KLK7, KLK12, KLK13 and KLK14. Doesn't inhibit KLK8. The protein is Serine protease inhibitor Kazal-type 6 (SPINK6) of Homo sapiens (Human).